Reading from the N-terminus, the 250-residue chain is Uracil-DNA glycosylase (250 aa).

Residue aspartate 78 is the Proton acceptor of the active site. Residues 228-250 (RGQKPVDWSGEQNNASRQGEFAL) are disordered.

Belongs to the uracil-DNA glycosylase (UDG) superfamily. UNG family.

The protein localises to the cytoplasm. The enzyme catalyses Hydrolyzes single-stranded DNA or mismatched double-stranded DNA and polynucleotides, releasing free uracil.. In terms of biological role, excises uracil residues from the DNA which can arise as a result of misincorporation of dUMP residues by DNA polymerase or due to deamination of cytosine. The sequence is that of Uracil-DNA glycosylase from Bordetella pertussis (strain Tohama I / ATCC BAA-589 / NCTC 13251).